The primary structure comprises 509 residues: Sperm-associated antigen 6 (509 aa).

ARM repeat units lie at residues 31–70 (PQNI…RLAN), 73–112 (DDLA…AVGK), 115–154 (PQLA…YIAR), 157–196 (AELS…DIAK), 199–238 (PELA…QVSK), 241–280 (VDLA…EIAK), 325–365 (ENLA…QIGR), and 368–409 (PEHA…NILQ).

Interacts with SPAG16 and SPAG17. In terms of tissue distribution, highly expressed in testis.

It localises to the cytoplasm. Its subcellular location is the cytoskeleton. The protein resides in the cell projection. The protein localises to the cilium. It is found in the flagellum. It localises to the cilium axoneme. Functionally, important for structural integrity of the central apparatus in the sperm tail and for flagellar motility. This is Sperm-associated antigen 6 (SPAG6) from Homo sapiens (Human).